Here is a 426-residue protein sequence, read N- to C-terminus: Tol-Pal system protein TolB (426 aa).

A signal peptide spans M1–A24.

Belongs to the TolB family. As to quaternary structure, the Tol-Pal system is composed of five core proteins: the inner membrane proteins TolA, TolQ and TolR, the periplasmic protein TolB and the outer membrane protein Pal. They form a network linking the inner and outer membranes and the peptidoglycan layer.

The protein resides in the periplasm. Part of the Tol-Pal system, which plays a role in outer membrane invagination during cell division and is important for maintaining outer membrane integrity. This chain is Tol-Pal system protein TolB, found in Actinobacillus pleuropneumoniae serotype 5b (strain L20).